A 766-amino-acid polypeptide reads, in one-letter code: Semaphorin-4E (766 aa).

An N-terminal signal peptide occupies residues 1-24; sequence MMSLLAVLCVLYVWSPAMLTGGLG. At 25–664 the chain is on the extracellular side; the sequence is STLDSLPRKT…LHHVKEKERT (640 aa). A Sema domain is found at 27–499; sequence LDSLPRKTVP…SEVGVVQLSI (473 aa). An N-linked (GlcNAc...) asparagine glycan is attached at Asn-52. Intrachain disulfides connect Cys-100/Cys-111, Cys-129/Cys-138, Cys-261/Cys-373, and Cys-285/Cys-329. An N-linked (GlcNAc...) asparagine glycan is attached at Asn-433. One can recognise a PSI domain in the interval 501 to 552; that stretch reads ECGRYQTCLDCVLARDPHCGWDLDTEHCATINSIHRTRSSTVIQSLNDGDAS. 2 disulfides stabilise this stretch: Cys-502/Cys-519 and Cys-511/Cys-528. The region spanning 555–640 is the Ig-like C2-type domain; it reads PAIGVSKPVN…QRKYQTQHVA (86 aa). N-linked (GlcNAc...) asparagine glycosylation is found at Asn-564 and Asn-612. Residues Cys-577 and Cys-623 are joined by a disulfide bond. A helical membrane pass occupies residues 665–685; that stretch reads LVAMVVILSLVLAALLIWNLY. Residues 686-766 lie on the Cytoplasmic side of the membrane; it reads KGHLSLPCLH…LKYIDDESEI (81 aa). The interval 724 to 750 is disordered; the sequence is FNSNNNHANDQRYSSSRETDRLSTTAG.

It belongs to the semaphorin family.

Its subcellular location is the membrane. This chain is Semaphorin-4E (sema4e), found in Danio rerio (Zebrafish).